The following is a 246-amino-acid chain: MKYDIIGDIHGCLQEFQNLTEKLGYNWSSGLPVHPDQRKLAFVGDITDRGPHSLRMIEIVWELVIHKKVAYYAPGNHCNKLYRFFLGRNVTIAHGLETTVAEYEALPSHKQNMIKEKFITLYEQSPLYHVLDEKRLLVCHAGIRQDYIGRQDKKVQTFVLYGDITGEKHADGSPVRRDWAKEYKGTTWIVYGHTPVKEPRFVNHTVNIDTGAVFGGKLTGLRYPEMEIVSVPSSLPFVPEKFRPIS.

It belongs to the PrpE family. Ni(2+) serves as cofactor.

The catalysed reaction is P(1),P(4)-bis(5'-guanosyl) tetraphosphate + H2O = GMP + GTP + 2 H(+). Functionally, asymmetrically hydrolyzes Ap4p to yield AMP and ATP. This is Bis(5'-nucleosyl)-tetraphosphatase PrpE [asymmetrical] from Bacillus cereus (strain AH187).